A 347-amino-acid polypeptide reads, in one-letter code: MSSKQSADKQKALDSALAQIERQFGKGSIMRLGGENAIQEIEASSTGSLGLDIALGIGGLPMGRIVEIYGPESSGKTTLTLHCIAEQQKRGGVCAFVDAEHALDPQYARKLGVDLDELLISQPDTGEQALEITDTLVRSGAVNMVVVDSVAALTPKSELEGDMGDSSVGVHARLMSQAMRKLTGSISRSKCMVIFINQIRMKIGVMFGSPETTTGGNALKFYSSVRLDIRRIGAIKDRDEVVGNATRVKVVKNKVAPPFKQVEFDIMYGEGISKTGELLDLGVKAGVVDKSGSWFSYGDERIGQGRENAKTFLRENQSIALAIEDKIRAAHGLEFDMSDDGEDILEA.

ATP is bound at residue 70-77 (GPESSGKT).

It belongs to the RecA family.

The protein resides in the cytoplasm. Functionally, can catalyze the hydrolysis of ATP in the presence of single-stranded DNA, the ATP-dependent uptake of single-stranded DNA by duplex DNA, and the ATP-dependent hybridization of homologous single-stranded DNAs. It interacts with LexA causing its activation and leading to its autocatalytic cleavage. The polypeptide is Protein RecA (Ruegeria pomeroyi (strain ATCC 700808 / DSM 15171 / DSS-3) (Silicibacter pomeroyi)).